We begin with the raw amino-acid sequence, 201 residues long: Casparian strip membrane protein 7 (201 aa).

The segment covering 1–11 has biased composition (acidic residues); sequence MEAGEEIEDGE. The interval 1-26 is disordered; it reads MEAGEEIEDGEPSTPTYKAHHPPPHL. Residues 1–34 lie on the Cytoplasmic side of the membrane; sequence MEAGEEIEDGEPSTPTYKAHHPPPHLPPPMRSSG. The helical transmembrane segment at 35–55 threads the bilayer; that stretch reads VSLVLSVADLVLRFVAIGGTA. The Extracellular segment spans residues 56 to 86; sequence GSAIAMATTSETLPFAAPFVRFRAEYSDLPT. Residues 87–107 traverse the membrane as a helical segment; it reads LMFFVVASSVVCAYLVLSLPA. Residues 108 to 128 are Cytoplasmic-facing; it reads SVVHVVRPGARSSRAILAFLD. The chain crosses the membrane as a helical span at residues 129–149; that stretch reads TVMLALLTASASAAAAIVYLA. Residues 150–171 are Extracellular-facing; it reads HRGSARANWLGICQQFTSFCQR. A helical membrane pass occupies residues 172–192; that stretch reads ITASLVGSFAAAVVLVALVFL. Topologically, residues 193–201 are cytoplasmic; it reads SALSLARRA.

The protein belongs to the Casparian strip membrane proteins (CASP) family. Homodimer and heterodimers.

The protein localises to the cell membrane. Its function is as follows. Regulates membrane-cell wall junctions and localized cell wall deposition. Required for establishment of the Casparian strip membrane domain (CSD) and the subsequent formation of Casparian strips, a cell wall modification of the root endodermis that determines an apoplastic barrier between the intraorganismal apoplasm and the extraorganismal apoplasm and prevents lateral diffusion. This is Casparian strip membrane protein 7 from Oryza sativa subsp. japonica (Rice).